A 126-amino-acid chain; its full sequence is Protein chibby homolog 1 (126 aa).

Residues 1–10 (MPFFGNTFSP) show a composition bias toward polar residues. A disordered region spans residues 1–26 (MPFFGNTFSPKKTPPRKSASLSNLHS). 2 positions are modified to phosphoserine: serine 9 and serine 20. A minimal region for the interaction with PKD2 region spans residues 60 to 112 (IAETGVSGGVDRREVQRLRRRNQQLEEENNLLRLKVDILLDMLSESTAESHLM). Residues 67–125 (GGVDRREVQRLRRRNQQLEEENNLLRLKVDILLDMLSESTAESHLMEKELDELRISRKR) adopt a coiled-coil conformation. The tract at residues 77 to 98 (LRRRNQQLEEENNLLRLKVDIL) is leucine-zipper; mediates homodimerization.

Belongs to the chibby family. As to quaternary structure, homodimer. Homodimerization is essential for nuclear localization and interaction with KPNA4 but is dispensable for interaction with CTNNB1. Interacts with polycystin-2/PKD2 and GM130. Interacts with the C-terminal region of CTNNB1. Interacts (C-terminus) with TCIM (C-terminus), TCIM competes with CTNNB1 for the interaction with CBY1. Interacts with FAM92A; this interaction facilitates targeting of FAM92A to cilium basal body. Interacts with CIBAR2. Interacts with KPNA4. In terms of tissue distribution, widely expressed. Expressed at higher levels in heart, skeletal muscle, kidney and placenta. Also found in brain, lung, liver and testis. Significantly down-regulated in thyroid and metastatic uterine tumors.

Its subcellular location is the nucleus speckle. It localises to the cytoplasm. It is found in the cytoskeleton. The protein localises to the cilium basal body. The protein resides in the microtubule organizing center. Its subcellular location is the centrosome. It localises to the centriole. It is found in the golgi apparatus. The protein localises to the trans-Golgi network. The protein resides in the cell projection. Its subcellular location is the cilium. It localises to the flagellum. It is found in the nucleus. Functionally, inhibits the Wnt/Wingless pathway by binding to CTNNB1/beta-catenin and inhibiting beta-catenin-mediated transcriptional activation through competition with TCF/LEF transcription factors. Has also been shown to play a role in regulating the intracellular trafficking of polycystin-2/PKD2 and possibly of other intracellular proteins. Promotes adipocyte and cardiomyocyte differentiation. The polypeptide is Protein chibby homolog 1 (CBY1) (Homo sapiens (Human)).